The sequence spans 254 residues: Tumor necrosis factor ligand superfamily member 9 (254 aa).

The Cytoplasmic portion of the chain corresponds to Met1–Pro28. Residues Trp29–Leu49 traverse the membrane as a helical; Signal-anchor for type II membrane protein segment. The Extracellular segment spans residues Ala50–Glu254. One can recognise a THD domain in the interval Met91–Val240.

The protein belongs to the tumor necrosis factor family. In terms of assembly, homotrimer. Expressed in brain, placenta, lung, skeletal muscle and kidney.

The protein resides in the membrane. Its function is as follows. Cytokine that binds to TNFRSF9. Induces the proliferation of activated peripheral blood T-cells. May have a role in activation-induced cell death (AICD). May play a role in cognate interactions between T-cells and B-cells/macrophages. In Homo sapiens (Human), this protein is Tumor necrosis factor ligand superfamily member 9 (TNFSF9).